The primary structure comprises 253 residues: Glucosamine-6-phosphate deaminase (253 aa).

Residue D65 is the Proton acceptor; for enolization step of the active site. N133 serves as the catalytic For ring-opening step. H135 functions as the Proton acceptor; for ring-opening step in the catalytic mechanism. Catalysis depends on E140, which acts as the For ring-opening step.

Belongs to the glucosamine/galactosamine-6-phosphate isomerase family. NagB subfamily.

It carries out the reaction alpha-D-glucosamine 6-phosphate + H2O = beta-D-fructose 6-phosphate + NH4(+). The protein operates within amino-sugar metabolism; N-acetylneuraminate degradation; D-fructose 6-phosphate from N-acetylneuraminate: step 5/5. In terms of biological role, catalyzes the reversible isomerization-deamination of glucosamine 6-phosphate (GlcN6P) to form fructose 6-phosphate (Fru6P) and ammonium ion. This chain is Glucosamine-6-phosphate deaminase, found in Corynebacterium efficiens (strain DSM 44549 / YS-314 / AJ 12310 / JCM 11189 / NBRC 100395).